A 74-amino-acid polypeptide reads, in one-letter code: Conotoxin Vc7.2 (74 aa).

Positions methionine 1–glycine 22 are cleaved as a signal peptide. A propeptide spanning residues isoleucine 23–arginine 49 is cleaved from the precursor. Cystine bridges form between cysteine 53–cysteine 63, cysteine 58–cysteine 68, and cysteine 62–cysteine 73.

As to expression, expressed by the venom duct.

The protein localises to the secreted. Functionally, probable toxin with unknown function. Does not produce any changes in intracellular calcium levels in mouse dorsal root ganglion cells. In vivo, does not produce behavioral changes when intracranially injected into mice. This Conus victoriae (Queen Victoria cone) protein is Conotoxin Vc7.2.